The chain runs to 75 residues: Tautomerase PptA (75 aa).

The active-site Proton acceptor; via imino nitrogen is Pro-2.

This sequence belongs to the 4-oxalocrotonate tautomerase family. PptA subfamily. In terms of assembly, homodimer.

The protein localises to the cytoplasm. The sequence is that of Tautomerase PptA from Escherichia coli O139:H28 (strain E24377A / ETEC).